A 536-amino-acid chain; its full sequence is 2-isopropylmalate synthase (536 aa).

In terms of domain architecture, Pyruvate carboxyltransferase spans 8–269 (IIIFDTTLRD…YYNPFLGRPV (262 aa)). Mn(2+) is bound by residues D17, H208, H210, and N244. A regulatory domain region spans residues 408–536 (RLELVQVSCG…KEKAAVTSAS (129 aa)).

This sequence belongs to the alpha-IPM synthase/homocitrate synthase family. LeuA type 1 subfamily. In terms of assembly, homodimer. Mn(2+) is required as a cofactor.

Its subcellular location is the cytoplasm. The catalysed reaction is 3-methyl-2-oxobutanoate + acetyl-CoA + H2O = (2S)-2-isopropylmalate + CoA + H(+). The protein operates within amino-acid biosynthesis; L-leucine biosynthesis; L-leucine from 3-methyl-2-oxobutanoate: step 1/4. Functionally, catalyzes the condensation of the acetyl group of acetyl-CoA with 3-methyl-2-oxobutanoate (2-ketoisovalerate) to form 3-carboxy-3-hydroxy-4-methylpentanoate (2-isopropylmalate). This Gloeothece citriformis (strain PCC 7424) (Cyanothece sp. (strain PCC 7424)) protein is 2-isopropylmalate synthase.